The chain runs to 704 residues: Glycogen [starch] synthase, liver (704 aa).

S8 carries the phosphoserine; by AMPK and PKA modification. S11 carries the post-translational modification Phosphoserine. K40 lines the UDP pocket. UDP-alpha-D-glucose is bound by residues H205 and R211. Alpha-D-glucose 6-phosphate contacts are provided by H291, E292, Q294, H297, and K301. R331 is a binding site for UDP. Residue R331 participates in UDP-alpha-D-glucose binding. Alpha-D-glucose 6-phosphate is bound at residue H501. The UDP-alpha-D-glucose site is built by E510, W512, and G513. T515 is a UDP binding site. R582 and R586 together coordinate alpha-D-glucose 6-phosphate. The segment at 620–704 (KFHLEPTSPP…KKKLHGEYKN (85 aa)) is disordered. A Phosphoserine modification is found at S627. A phosphoserine; by GSK3-alpha and GSK3-beta mark is found at S641, S645, S649, and S653. Positions 647–657 (SGSQASSPQCS) are enriched in low complexity. Residue S657 is modified to Phosphoserine; by CK2. A compositionally biased stretch (acidic residues) spans 658-675 (DAEDEEDEDERYDEEEEA). S684 carries the post-translational modification Phosphoserine.

It belongs to the glycosyltransferase 3 family. Part of the glycogen synthase (GS)-glycogenin complex, a heterooctamer composed of a tetramer of GS and 2 dimers of glycogenin, where each GS protomer binds to one glycogenin subunit (via glycogenin C-terminus); the GS tetramer may dissociate from glycogenin dimers to continue glycogen polymerization on its own. May also form a heterooctamer complex with GYG1 (via GYG1 C-terminus). In terms of processing, phosphorylation reduces the activity towards UDP-alpha-D-glucose. Primed phosphorylation at Ser-657 (site 5) by CSNK2A1 and CSNK2A2 is required for inhibitory phosphorylation at Ser-641 (site 3a), Ser-645 (site 3b), Ser-649 (site 3c) and Ser-653 (site 4) by GSK3A an GSK3B. Dephosphorylation at Ser-641 and Ser-645 by PP1 activates the enzyme. Phosphorylation at Ser-8 is not required for interaction with GYG1. Interaction with GYG1 does not regulate the phosphorylation at Ser-8 and Ser-641. Specifically expressed in liver.

It carries out the reaction [(1-&gt;4)-alpha-D-glucosyl](n) + UDP-alpha-D-glucose = [(1-&gt;4)-alpha-D-glucosyl](n+1) + UDP + H(+). It functions in the pathway glycan biosynthesis; glycogen biosynthesis. With respect to regulation, allosteric activation by glucose-6-phosphate. Phosphorylation reduces the activity towards UDP-glucose. When in the non-phosphorylated state, glycogen synthase does not require glucose-6-phosphate as an allosteric activator; when phosphorylated it does. Functionally, glycogen synthase participates in the glycogen biosynthetic process along with glycogenin and glycogen branching enzyme. Extends the primer composed of a few glucose units formed by glycogenin by adding new glucose units to it. In this context, glycogen synthase transfers the glycosyl residue from UDP-Glc to the non-reducing end of alpha-1,4-glucan. The protein is Glycogen [starch] synthase, liver of Mus musculus (Mouse).